A 496-amino-acid chain; its full sequence is Glycerol kinase (496 aa).

Position 11 (Thr-11) interacts with ADP. 3 residues coordinate ATP: Thr-11, Thr-12, and Ser-13. Thr-11 serves as a coordination point for sn-glycerol 3-phosphate. Arg-15 contacts ADP. Residues Arg-81, Glu-82, Tyr-133, and Asp-242 each coordinate sn-glycerol 3-phosphate. Glycerol-binding residues include Arg-81, Glu-82, Tyr-133, Asp-242, and Gln-243. ADP contacts are provided by Thr-264 and Gly-307. ATP contacts are provided by Thr-264, Gly-307, Gln-311, and Gly-408. ADP is bound by residues Gly-408 and Asn-412.

This sequence belongs to the FGGY kinase family.

It catalyses the reaction glycerol + ATP = sn-glycerol 3-phosphate + ADP + H(+). It functions in the pathway polyol metabolism; glycerol degradation via glycerol kinase pathway; sn-glycerol 3-phosphate from glycerol: step 1/1. Inhibited by fructose 1,6-bisphosphate (FBP). Key enzyme in the regulation of glycerol uptake and metabolism. Catalyzes the phosphorylation of glycerol to yield sn-glycerol 3-phosphate. This chain is Glycerol kinase, found in Aromatoleum aromaticum (strain DSM 19018 / LMG 30748 / EbN1) (Azoarcus sp. (strain EbN1)).